The primary structure comprises 858 residues: Ubiquitin carboxyl-terminal hydrolase 13 (858 aa).

Ser-112 carries the phosphoserine modification. Residues 185–293 (PVSKYANNLV…KHLAHFGIDM (109 aa)) form a UBP-type; degenerate zinc finger. 4 residues coordinate Zn(2+): Cys-209, Cys-212, Cys-229, and His-242. Lys-309 is covalently cross-linked (Glycyl lysine isopeptide (Lys-Gly) (interchain with G-Cter in SUMO2)). The region spanning 334 to 856 (TGLKNLGNSC…LGYMYFYRRI (523 aa)) is the USP domain. Cys-343 serves as the catalytic Nucleophile. A Glycyl lysine isopeptide (Lys-Gly) (interchain with G-Cter in SUMO2) cross-link involves residue Lys-403. 2 UBA domains span residues 650 to 691 (DIDE…IIVH) and 722 to 762 (QPPE…IFSH). His-818 serves as the catalytic Proton acceptor.

It belongs to the peptidase C19 family. Interacts with UFD1. Interacts (via UBA domains) with SIAH2 (when ubiquitinated). Interacts with BAG6; the interaction is direct and may mediate UBL4A deubiquitination. Interacts (via UBA 2 domain) with AMFR; the interaction is direct. Interacts with UBL4A; may be indirect via BAG6. Interacts with NEDD4.

It localises to the cytoplasm. The enzyme catalyses Thiol-dependent hydrolysis of ester, thioester, amide, peptide and isopeptide bonds formed by the C-terminal Gly of ubiquitin (a 76-residue protein attached to proteins as an intracellular targeting signal).. Its activity is regulated as follows. Specifically inhibited by spautin-1 (specific and potent autophagy inhibitor-1), a derivative of MBCQ that binds to USP13 and inhibits deubiquitinase activity. Regulated by PIK3C3/VPS34-containing complexes. The weak deubiquitinase activity in vitro suggests the existence of some mechanism that activates the enzyme. Functionally, deubiquitinase that mediates deubiquitination of target proteins such as BECN1, MITF, SKP2 and USP10 and is involved in various processes such as autophagy, endoplasmic reticulum-associated degradation (ERAD), cell cycle progression or DNA damage response. Component of a regulatory loop that controls autophagy and p53/TP53 levels: mediates deubiquitination of BECN1, a key regulator of autophagy, leading to stabilize the PIK3C3/VPS34-containing complexes. Alternatively, forms with NEDD4 a deubiquitination complex, which subsequently stabilizes VPS34 to promote autophagy. Also deubiquitinates USP10, an essential regulator of p53/TP53 stability. In turn, PIK3C3/VPS34-containing complexes regulate USP13 stability, suggesting the existence of a regulatory system by which PIK3C3/VPS34-containing complexes regulate p53/TP53 protein levels via USP10 and USP13. Recruited by nuclear UFD1 and mediates deubiquitination of SKP2, thereby regulating endoplasmic reticulum-associated degradation (ERAD). Also regulates ERAD through the deubiquitination of UBL4A a component of the BAG6/BAT3 complex. Mediates stabilization of SIAH2 independently of deubiquitinase activity: binds ubiquitinated SIAH2 and acts by impairing SIAH2 autoubiquitination. Regulates the cell cycle progression by stabilizing cell cycle proteins such as SKP2 and AURKB. In addition, plays an important role in maintaining genomic stability and in DNA replication checkpoint activation via regulation of RAP80 and TOPBP1. Deubiquitinates the multifunctional protein HMGB1 and subsequently drives its nucleocytoplasmic localization and its secretion. Positively regulates type I and type II interferon signalings by deubiquitinating STAT1 but negatively regulates antiviral response by deubiquitinating STING1. In Mus musculus (Mouse), this protein is Ubiquitin carboxyl-terminal hydrolase 13 (Usp13).